The sequence spans 456 residues: PTS system sucrose-specific EIIBC component (456 aa).

Residues 4–87 (EQISCSLLPL…TQAAGISESS (84 aa)) enclose the PTS EIIB type-1 domain. Cys26 functions as the Phosphocysteine intermediate; for EIIB activity in the catalytic mechanism. One can recognise a PTS EIIC type-1 domain in the interval 107 to 456 (RLLSNIFVPI…LVLKYKTDAE (350 aa)). Transmembrane regions (helical) follow at residues 112 to 132 (IFVP…LLGM), 144 to 164 (AIYI…PILI), 181 to 201 (TLGG…AAGF), 213 to 233 (MIGY…MSIV), 247 to 267 (LILT…LIIG), 288 to 308 (AGWL…ITGI), 329 to 349 (FLLP…LAVW), 360 to 380 (ITLP…IFGI), 388 to 408 (FIAA…VHVY), and 428 to 448 (LLNY…VSLV).

Its subcellular location is the cell inner membrane. It carries out the reaction N(pros)-phospho-L-histidyl-[protein](out) + sucrose = sucrose 6(G)-phosphate(in) + L-histidyl-[protein]. The phosphoenolpyruvate-dependent sugar phosphotransferase system (sugar PTS), a major carbohydrate active transport system, catalyzes the phosphorylation of incoming sugar substrates concomitantly with their translocation across the cell membrane. This system is involved in sucrose transport. The chain is PTS system sucrose-specific EIIBC component from Salmonella typhimurium.